Here is a 406-residue protein sequence, read N- to C-terminus: Methyltransferase cfoD (406 aa).

S-adenosyl-L-methionine-binding residues include Asp-270 and Arg-312. The active-site Proton acceptor is His-315.

This sequence belongs to the class I-like SAM-binding methyltransferase superfamily. Cation-independent O-methyltransferase family.

It functions in the pathway secondary metabolite biosynthesis; flavonoid biosynthesis. In terms of biological role, methyltransferase; part of the gene cluster that mediates the biosynthesis of chlorflavonin, a fungal flavonoid with acetolactate synthase inhibitory activity. Within the pathway, cfoD is responsible for the methylation at position C3-OH of flavonoid. The pathway begins with the PKS-NRPS hybrid synthetase cfoA that uses benzoic acid or p-hydroxybenzoic acid as a starter unit with four rounds of chain elongation using malonyl-CoA to form the chalcone skeleton. Then, a new type of chalcone isomerase, cfoK, catalyzes the conversion of the chalcone into a flavanone by a histidine-mediated oxa-Michael addition mechanism. The desaturation of flavanone to flavone is catalyzed by a new type of flavone synthase, the flavin mononucleotide (FMN)-dependent oxidoreductase cfoJ. Monooxygenases cfoF, cfoG, and P450 cfoH are responsible for the hydroxylation of the flavonoid skeleton at sites C3, C8, and C2', respectively. Like cfoF, the dehydratase cfoI also plays a role in the hydroxylation of position C3. Methyltransferases cfoB, cfoC, and cfoD then catalyze the methylation of C7-OH, C8-OH, and C3-OH, respectively. Finally, the monooxygenase cfoE is responsible for the chlorination of flavonoid at position C3'. The protein is Methyltransferase cfoD of Aspergillus candidus.